Consider the following 316-residue polypeptide: Homoserine kinase (316 aa).

97–107 (PPARGLGSSAS) contributes to the ATP binding site.

It belongs to the GHMP kinase family. Homoserine kinase subfamily.

It localises to the cytoplasm. It carries out the reaction L-homoserine + ATP = O-phospho-L-homoserine + ADP + H(+). The protein operates within amino-acid biosynthesis; L-threonine biosynthesis; L-threonine from L-aspartate: step 4/5. Catalyzes the ATP-dependent phosphorylation of L-homoserine to L-homoserine phosphate. The polypeptide is Homoserine kinase (Prochlorococcus marinus (strain MIT 9303)).